A 61-amino-acid chain; its full sequence is UPF0370 protein Spro_3503 (61 aa).

The helical transmembrane segment at Trp3–Ile23 threads the bilayer. The span at Lys38 to Asn48 shows a compositional bias: basic and acidic residues. The disordered stretch occupies residues Lys38 to Lys61. Residues Ala49 to Lys61 are compositionally biased toward acidic residues.

This sequence belongs to the UPF0370 family.

It is found in the cell membrane. This Serratia proteamaculans (strain 568) protein is UPF0370 protein Spro_3503.